The following is a 401-amino-acid chain: Methyltransferase cfoC (401 aa).

D268 provides a ligand contact to S-adenosyl-L-methionine. H308 acts as the Proton acceptor in catalysis.

Belongs to the class I-like SAM-binding methyltransferase superfamily. Cation-independent O-methyltransferase family.

Its pathway is secondary metabolite biosynthesis; flavonoid biosynthesis. Methyltransferase; part of the gene cluster that mediates the biosynthesis of chlorflavonin, a fungal flavonoid with acetolactate synthase inhibitory activity. Within the pathway, cfoC is responsible for the methylation at position C8-OH of flavonoid. The pathway begins with the PKS-NRPS hybrid synthetase cfoA that uses benzoic acid or p-hydroxybenzoic acid as a starter unit with four rounds of chain elongation using malonyl-CoA to form the chalcone skeleton. Then, a new type of chalcone isomerase, cfoK, catalyzes the conversion of the chalcone into a flavanone by a histidine-mediated oxa-Michael addition mechanism. The desaturation of flavanone to flavone is catalyzed by a new type of flavone synthase, the flavin mononucleotide (FMN)-dependent oxidoreductase cfoJ. Monooxygenases cfoF, cfoG, and P450 cfoH are responsible for the hydroxylation of the flavonoid skeleton at sites C3, C8, and C2', respectively. Like cfoF, the dehydratase cfoI also plays a role in the hydroxylation of position C3. Methyltransferases cfoB, cfoC, and cfoD then catalyze the methylation of C7-OH, C8-OH, and C3-OH, respectively. Finally, the monooxygenase cfoE is responsible for the chlorination of flavonoid at position C3'. This chain is Methyltransferase cfoC, found in Aspergillus candidus.